The sequence spans 69 residues: MGMRMMFTVFLLVVLATTVVSFTSNRVLDPAFRRRNAAAKASDLIALNARRPECCTHPACHVSNPELCG.

An N-terminal signal peptide occupies residues 1–21; that stretch reads MGMRMMFTVFLLVVLATTVVS. Residues 22–49 constitute a propeptide that is removed on maturation; it reads FTSNRVLDPAFRRRNAAAKASDLIALNA. 2 positions are modified to 4-hydroxyproline; in Mr1.7b: Pro-52 and Pro-58. Disulfide bonds link Cys-54/Cys-60 and Cys-55/Cys-68. Residues 56-58 are lacks the Ser-Xaa-Pro motif that is crucial for potent interaction with nAChR; sequence THP. Position 68 is a cysteine amide (Cys-68).

Belongs to the conotoxin A superfamily. Two 4-hydroxyprolines have been detected by MS but the assignment of which of the three prolines is modified is uncertain. In terms of tissue distribution, expressed by the venom duct.

It localises to the secreted. Acts as a co-agonist with PNU (an alpha-7 nAChR-selective allosteric modulator) at the endogenous alpha-7/CHRNA7 nicotinic acetylcholine receptors (nAChR) when tested in human SH-SY5Y neuroblastoma cells. Is the third alpha-conotoxin that acts as an agonist (after alpha-conotoxin SrIA/SrIB). Also acts as an antagonist at human alpha-7 nAChRs heterologously expressed in Xenopus oocytes. Has possibly a distinct nAChR binding mode from other alpha-conotoxins, due to a different three residue motif (lacks the Ser-Xaa-Pro motif). In terms of biological role, acts as a weak partial agonist at alpha-7/CHRNA7 nicotinic acetylcholine receptors (nAChR) when tested in human SH-SY5Y neuroblastoma cells. Has possibly a distinct nAChR binding mode from other alpha-conotoxins, due to a different three residue motif (lacks the Ser-Xaa-Pro motif). This is Alpha-conotoxin Mr1.7a from Conus marmoreus (Marble cone).